Consider the following 253-residue polypeptide: Type III pantothenate kinase (253 aa).

Aspartate 6–valine 13 serves as a coordination point for ATP. Residue glycine 107–arginine 110 participates in substrate binding. Aspartate 109 (proton acceptor) is an active-site residue. Aspartate 129 lines the K(+) pocket. Threonine 132 provides a ligand contact to ATP. Threonine 184 contacts substrate.

Belongs to the type III pantothenate kinase family. In terms of assembly, homodimer. NH4(+) serves as cofactor. It depends on K(+) as a cofactor.

The protein localises to the cytoplasm. It carries out the reaction (R)-pantothenate + ATP = (R)-4'-phosphopantothenate + ADP + H(+). The protein operates within cofactor biosynthesis; coenzyme A biosynthesis; CoA from (R)-pantothenate: step 1/5. Catalyzes the phosphorylation of pantothenate (Pan), the first step in CoA biosynthesis. The chain is Type III pantothenate kinase from Exiguobacterium sibiricum (strain DSM 17290 / CCUG 55495 / CIP 109462 / JCM 13490 / 255-15).